Consider the following 482-residue polypeptide: Probable cytochrome P450 508D1 (482 aa).

A helical transmembrane segment spans residues 1–21; it reads MVYLKNILIFLIIFLINPLVK. A heme-binding site is contributed by Cys-428.

It belongs to the cytochrome P450 family. It depends on heme as a cofactor.

The protein localises to the membrane. The sequence is that of Probable cytochrome P450 508D1 (cyp508D1) from Dictyostelium discoideum (Social amoeba).